The sequence spans 51 residues: DNA-binding protein (51 aa).

The segment at 1–51 is disordered; it reads MVYRRRRSRSADGTYTRRRRSSGYRRRPGRPRTYRRSRSATRRSGYRRRRY. 2 repeat units span residues 5–10 and 17–22. The 2 X 6 AA repeats of R-R-R-R-S-S stretch occupies residues 5–22; that stretch reads RRRSRSADGTYTRRRRSS. Basic residues predominate over residues 16 to 51; the sequence is TRRRRSSGYRRRPGRPRTYRRSRSATRRSGYRRRRY.

Probably phosphorylated in infected cells.

Its subcellular location is the virion. Thought to be responsible for DNA condensation during packaging of the nucleocapsids. In Orgyia pseudotsugata (Douglas-fir tussock moth), this protein is DNA-binding protein (P6.5).